The primary structure comprises 318 residues: MQHNLKTIFVISHSTLTIILFTELVTGIIGNGFMALVHCMDWLRRKKISLVNQILTALAISRIFQLCLLFISLVISFSYPDLTTTSLIKVTCNLWIIVNHFNIWLATCLGIFYFLKISNFSNSLFLYLKWRVEKVVLVTLLVSLVLLTLNSLLINLEINICINEYQRNITYSFNSYYHANCHRQMLSLHIIFLSVPFVLSLSTFLLLIFSLGTHHKKMQQHVQGRRDASTMAHFKALQTVIAFLLLYSIFILSVLVQIWKYELLKKNLFILFCQVAYVAFPSFHSYILILGDMKMRQACLSVLWWQKFRKNYVEPLDL.

Over 1–16 (MQHNLKTIFVISHSTL) the chain is Extracellular. A helical transmembrane segment spans residues 17–37 (TIILFTELVTGIIGNGFMALV). The Cytoplasmic segment spans residues 38–53 (HCMDWLRRKKISLVNQ). The chain crosses the membrane as a helical span at residues 54–74 (ILTALAISRIFQLCLLFISLV). Residues 75–93 (ISFSYPDLTTTSLIKVTCN) are Extracellular-facing. A helical transmembrane segment spans residues 94–114 (LWIIVNHFNIWLATCLGIFYF). The Cytoplasmic segment spans residues 115-134 (LKISNFSNSLFLYLKWRVEK). A helical membrane pass occupies residues 135–155 (VVLVTLLVSLVLLTLNSLLIN). Residues 156 to 189 (LEINICINEYQRNITYSFNSYYHANCHRQMLSLH) are Extracellular-facing. The N-linked (GlcNAc...) asparagine glycan is linked to Asn-168. A helical membrane pass occupies residues 190 to 210 (IIFLSVPFVLSLSTFLLLIFS). The Cytoplasmic portion of the chain corresponds to 211 to 238 (LGTHHKKMQQHVQGRRDASTMAHFKALQ). The helical transmembrane segment at 239 to 259 (TVIAFLLLYSIFILSVLVQIW) threads the bilayer. At 260 to 268 (KYELLKKNL) the chain is on the extracellular side. Residues 269–289 (FILFCQVAYVAFPSFHSYILI) form a helical membrane-spanning segment. The Cytoplasmic portion of the chain corresponds to 290–318 (LGDMKMRQACLSVLWWQKFRKNYVEPLDL).

It belongs to the G-protein coupled receptor T2R family.

It localises to the membrane. In terms of biological role, putative taste receptor which may play a role in the perception of bitterness. The chain is Taste receptor type 2 member 117 from Rattus norvegicus (Rat).